The following is a 493-amino-acid chain: uncharacterized protein (493 aa).

The tract at residues 316-403 (LNMVNFGPDD…NSVDNSVHDS (88 aa)) is disordered. Residues 338 to 353 (ESQNNSESNSESITES) show a composition bias toward low complexity. Residues 371–398 (SQDNDTVQIDKSTSSDSVHNYFDNSVDN) show a composition bias toward polar residues.

It belongs to the mimivirus R69 family.

This is an uncharacterized protein from Acanthamoeba polyphaga (Amoeba).